The sequence spans 357 residues: MSVISFKIKVPASSANIGPGFDVLGIGLQLYLTITVTIDPSIDTSSDPHHALLSYEGDGKVPFESNENLITQTALYVMRCNGIKDFPRGTHIHVNNPIPLGRGLGSSASAIVAGVYLGNEIGNLKLDKYRLLDYCLMIERHPDNIAAAMLGGFIGSYLNELSSEDSQLTTVPLDYILPKVKNGELITPQDKIVSQQPPNNIGQYVEYKWNKKIKCLTIIPNFELSTDLSRSVLPKNYQLPDIVYNLQRIAILTTALTQDPPNHKVIYQSMKDKLHQPYRFGLIPGLNTVLQKITPESYPGLCGICLSGAGPTILCLATDGFEKIANDVIEIFKQEGIECDSKLLDLAYDGATVEYGS.

The protein belongs to the GHMP kinase family. Homoserine kinase subfamily. As to quaternary structure, homodimer.

The enzyme catalyses L-homoserine + ATP = O-phospho-L-homoserine + ADP + H(+). It functions in the pathway amino-acid biosynthesis; L-threonine biosynthesis; L-threonine from L-aspartate: step 4/5. In terms of biological role, commits homoserine to the threonine biosynthesis pathway by catalyzing its O-phosphorylation. This is Homoserine kinase (THR1) from Candida albicans (strain SC5314 / ATCC MYA-2876) (Yeast).